Reading from the N-terminus, the 386-residue chain is Acetate kinase (386 aa).

A Mg(2+)-binding site is contributed by N7. ATP is bound at residue K14. R78 contributes to the substrate binding site. D135 serves as the catalytic Proton donor/acceptor. Residues 195–199 (HLGNG), 268–270 (DMR), and 316–320 (GIGEN) contribute to the ATP site. E370 contacts Mg(2+).

The protein belongs to the acetokinase family. In terms of assembly, homodimer. Requires Mg(2+) as cofactor. The cofactor is Mn(2+).

It localises to the cytoplasm. It carries out the reaction acetate + ATP = acetyl phosphate + ADP. Its pathway is metabolic intermediate biosynthesis; acetyl-CoA biosynthesis; acetyl-CoA from acetate: step 1/2. Its function is as follows. Catalyzes the formation of acetyl phosphate from acetate and ATP. Can also catalyze the reverse reaction. This Pseudarthrobacter chlorophenolicus (strain ATCC 700700 / DSM 12829 / CIP 107037 / JCM 12360 / KCTC 9906 / NCIMB 13794 / A6) (Arthrobacter chlorophenolicus) protein is Acetate kinase.